The following is a 78-amino-acid chain: Acyl carrier protein (78 aa).

One can recognise a Carrier domain in the interval 2–77 (STIEERVKKI…AAIDYILSHQ (76 aa)). Residue serine 37 is modified to O-(pantetheine 4'-phosphoryl)serine.

The protein belongs to the acyl carrier protein (ACP) family. In terms of processing, 4'-phosphopantetheine is transferred from CoA to a specific serine of apo-ACP by AcpS. This modification is essential for activity because fatty acids are bound in thioester linkage to the sulfhydryl of the prosthetic group.

It localises to the cytoplasm. It functions in the pathway lipid metabolism; fatty acid biosynthesis. Carrier of the growing fatty acid chain in fatty acid biosynthesis. The polypeptide is Acyl carrier protein (Tolumonas auensis (strain DSM 9187 / NBRC 110442 / TA 4)).